The chain runs to 154 residues: Aspartate carbamoyltransferase regulatory chain (154 aa).

Positions 109, 114, 138, and 141 each coordinate Zn(2+).

The protein belongs to the PyrI family. In terms of assembly, contains catalytic and regulatory chains. It depends on Zn(2+) as a cofactor.

Functionally, involved in allosteric regulation of aspartate carbamoyltransferase. This Aeromonas salmonicida (strain A449) protein is Aspartate carbamoyltransferase regulatory chain.